The sequence spans 390 residues: Leu/Ile/Val-binding protein homolog 6 (390 aa).

The N-terminal stretch at 1-21 (MKKIALTALAVFSLAASAAYA) is a signal peptide.

The protein belongs to the leucine-binding protein family.

Its function is as follows. Component of an amino-acid transport system. The polypeptide is Leu/Ile/Val-binding protein homolog 6 (Brucella abortus (strain 2308)).